The chain runs to 624 residues: Dihydroxy-acid dehydratase (624 aa).

Aspartate 81 contacts Mg(2+). Residue cysteine 122 coordinates [2Fe-2S] cluster. 2 residues coordinate Mg(2+): aspartate 123 and lysine 124. An N6-carboxylysine modification is found at lysine 124. Cysteine 195 contributes to the [2Fe-2S] cluster binding site. Glutamate 499 lines the Mg(2+) pocket. Catalysis depends on serine 525, which acts as the Proton acceptor.

The protein belongs to the IlvD/Edd family. Homodimer. The cofactor is [2Fe-2S] cluster. Mg(2+) is required as a cofactor.

The catalysed reaction is (2R)-2,3-dihydroxy-3-methylbutanoate = 3-methyl-2-oxobutanoate + H2O. The enzyme catalyses (2R,3R)-2,3-dihydroxy-3-methylpentanoate = (S)-3-methyl-2-oxopentanoate + H2O. It participates in amino-acid biosynthesis; L-isoleucine biosynthesis; L-isoleucine from 2-oxobutanoate: step 3/4. Its pathway is amino-acid biosynthesis; L-valine biosynthesis; L-valine from pyruvate: step 3/4. Its function is as follows. Functions in the biosynthesis of branched-chain amino acids. Catalyzes the dehydration of (2R,3R)-2,3-dihydroxy-3-methylpentanoate (2,3-dihydroxy-3-methylvalerate) into 2-oxo-3-methylpentanoate (2-oxo-3-methylvalerate) and of (2R)-2,3-dihydroxy-3-methylbutanoate (2,3-dihydroxyisovalerate) into 2-oxo-3-methylbutanoate (2-oxoisovalerate), the penultimate precursor to L-isoleucine and L-valine, respectively. The polypeptide is Dihydroxy-acid dehydratase (Shewanella baltica (strain OS185)).